We begin with the raw amino-acid sequence, 83 residues long: Short neurotoxin 3FTx-Oxy3 (83 aa).

The signal sequence occupies residues M1–T21. Intrachain disulfides connect C24–C45, C38–C62, C64–C75, and C76–C81.

The protein belongs to the three-finger toxin family. Short-chain subfamily. Type I alpha-neurotoxin sub-subfamily. As to expression, expressed by the venom gland.

It is found in the secreted. Its function is as follows. Binds to muscle nicotinic acetylcholine receptor (nAChR) and inhibit acetylcholine from binding to the receptor, thereby impairing neuromuscular transmission. In Oxyuranus microlepidotus (Inland taipan), this protein is Short neurotoxin 3FTx-Oxy3.